A 124-amino-acid polypeptide reads, in one-letter code: Large ribosomal subunit protein bL20 (124 aa).

The protein belongs to the bacterial ribosomal protein bL20 family.

Binds directly to 23S ribosomal RNA and is necessary for the in vitro assembly process of the 50S ribosomal subunit. It is not involved in the protein synthesizing functions of that subunit. The sequence is that of Large ribosomal subunit protein bL20 from Ehrlichia chaffeensis (strain ATCC CRL-10679 / Arkansas).